A 185-amino-acid chain; its full sequence is Large ribosomal subunit protein uL5 (185 aa).

Belongs to the universal ribosomal protein uL5 family. As to quaternary structure, part of the 50S ribosomal subunit; part of the 5S rRNA/L5/L18/L25 subcomplex. Contacts the 5S rRNA and the P site tRNA. Forms a bridge to the 30S subunit in the 70S ribosome.

In terms of biological role, this is one of the proteins that bind and probably mediate the attachment of the 5S RNA into the large ribosomal subunit, where it forms part of the central protuberance. In the 70S ribosome it contacts protein S13 of the 30S subunit (bridge B1b), connecting the 2 subunits; this bridge is implicated in subunit movement. Contacts the P site tRNA; the 5S rRNA and some of its associated proteins might help stabilize positioning of ribosome-bound tRNAs. In Bacteroides thetaiotaomicron (strain ATCC 29148 / DSM 2079 / JCM 5827 / CCUG 10774 / NCTC 10582 / VPI-5482 / E50), this protein is Large ribosomal subunit protein uL5.